The sequence spans 81 residues: Small ribosomal subunit protein bS18 (81 aa).

This sequence belongs to the bacterial ribosomal protein bS18 family. Part of the 30S ribosomal subunit. Forms a tight heterodimer with protein bS6.

Functionally, binds as a heterodimer with protein bS6 to the central domain of the 16S rRNA, where it helps stabilize the platform of the 30S subunit. This chain is Small ribosomal subunit protein bS18, found in Chloroflexus aurantiacus (strain ATCC 29366 / DSM 635 / J-10-fl).